A 273-amino-acid chain; its full sequence is 4-hydroxy-tetrahydrodipicolinate reductase (273 aa).

NAD(+) is bound by residues 8–13, Glu34, 102–104, and 128–131; these read GCAGNM, GTT, and SPNM. The active-site Proton donor/acceptor is the His161. (S)-2,3,4,5-tetrahydrodipicolinate is bound at residue His162. Lys165 functions as the Proton donor in the catalytic mechanism. 171–172 contributes to the (S)-2,3,4,5-tetrahydrodipicolinate binding site; sequence GT.

It belongs to the DapB family.

The protein resides in the cytoplasm. The catalysed reaction is (S)-2,3,4,5-tetrahydrodipicolinate + NAD(+) + H2O = (2S,4S)-4-hydroxy-2,3,4,5-tetrahydrodipicolinate + NADH + H(+). The enzyme catalyses (S)-2,3,4,5-tetrahydrodipicolinate + NADP(+) + H2O = (2S,4S)-4-hydroxy-2,3,4,5-tetrahydrodipicolinate + NADPH + H(+). It participates in amino-acid biosynthesis; L-lysine biosynthesis via DAP pathway; (S)-tetrahydrodipicolinate from L-aspartate: step 4/4. Its function is as follows. Catalyzes the conversion of 4-hydroxy-tetrahydrodipicolinate (HTPA) to tetrahydrodipicolinate. This Methanosphaera stadtmanae (strain ATCC 43021 / DSM 3091 / JCM 11832 / MCB-3) protein is 4-hydroxy-tetrahydrodipicolinate reductase.